A 601-amino-acid polypeptide reads, in one-letter code: Aspartate--tRNA(Asp/Asn) ligase (601 aa).

Residue Glu-177 participates in L-aspartate binding. Residues 201-204 form an aspartate region; sequence QLFK. Arg-223 serves as a coordination point for L-aspartate. Residues 223–225 and Gln-232 contribute to the ATP site; that span reads RDE. Residue His-455 coordinates L-aspartate. Glu-489 serves as a coordination point for ATP. Position 496 (Arg-496) interacts with L-aspartate. 541–544 lines the ATP pocket; sequence GWDR. A disordered region spans residues 568–601; that stretch reads VDPLTDAPAPIPLEQRRETGVDFKPKKKTDESAV. Positions 581–601 are enriched in basic and acidic residues; the sequence is EQRRETGVDFKPKKKTDESAV.

The protein belongs to the class-II aminoacyl-tRNA synthetase family. Type 1 subfamily. Homodimer.

It localises to the cytoplasm. The enzyme catalyses tRNA(Asx) + L-aspartate + ATP = L-aspartyl-tRNA(Asx) + AMP + diphosphate. Its function is as follows. Aspartyl-tRNA synthetase with relaxed tRNA specificity since it is able to aspartylate not only its cognate tRNA(Asp) but also tRNA(Asn). Reaction proceeds in two steps: L-aspartate is first activated by ATP to form Asp-AMP and then transferred to the acceptor end of tRNA(Asp/Asn). In Corynebacterium diphtheriae (strain ATCC 700971 / NCTC 13129 / Biotype gravis), this protein is Aspartate--tRNA(Asp/Asn) ligase.